A 118-amino-acid polypeptide reads, in one-letter code: Basic phospholipase A2 PA-10A (118 aa).

7 disulfide bridges follow: C11/C71, C27/C117, C29/C45, C44/C98, C51/C91, C60/C84, and C78/C89. Residues Y28, G30, and G32 each contribute to the Ca(2+) site. Residue H48 is part of the active site. A Ca(2+)-binding site is contributed by D49. The active site involves D92.

It belongs to the phospholipase A2 family. Group I subfamily. D49 sub-subfamily. Ca(2+) serves as cofactor. In terms of tissue distribution, expressed by the venom gland.

It localises to the secreted. The catalysed reaction is a 1,2-diacyl-sn-glycero-3-phosphocholine + H2O = a 1-acyl-sn-glycero-3-phosphocholine + a fatty acid + H(+). PLA2 catalyzes the calcium-dependent hydrolysis of the 2-acyl groups in 3-sn-phosphoglycerides. This Pseudechis australis (Mulga snake) protein is Basic phospholipase A2 PA-10A.